Consider the following 461-residue polypeptide: Toxin CfTX-B (461 aa).

The first 24 residues, 1–24 (MDPRISSRLRALALLVFVISITDG), serve as a signal peptide directing secretion. Residues 25–31 (IPNRAKR) constitute a propeptide that is removed on maturation.

This sequence belongs to the jellyfish toxin family. Type II subfamily. As to quaternary structure, oligomer. In terms of processing, contains 2 disulfide bonds. Nematocytes.

Its subcellular location is the secreted. The protein localises to the nematocyst. It is found in the target cell membrane. Functionally, the fraction containing this toxin and CfTX-B shows potent hemolytic activity. This fraction causes minor effects on the cardiovascular system of anesthetized rats (at 25 ug/kg), since it has no significant effects on heart rate but produces relatively small increases in mean arterial pressure. This chain is Toxin CfTX-B, found in Chironex fleckeri (Australian box jellyfish).